The chain runs to 93 residues: uncharacterized protein (93 aa).

To M.tuberculosis Rv1738.

This is an uncharacterized protein from Mycobacterium tuberculosis (strain CDC 1551 / Oshkosh).